The primary structure comprises 216 residues: MKAYTVEQGIVAPLDRANVDTDLIIPKQFLKSIKRTGFGDNLFDELRYLDEGYPGQDNAKRPKNPDFILNQPCYASATVLIARKNFGCGSSREHAPWALNEYGFRTVIAPSFADIFFNNCFKNGMLPVILDEETVDQLFKECAASEDYQLTIDLAAQEVKTPTGEAFKFEIDPFRKHCLLNGLDDIGLTLQNAGAIREFESKAKQSRPWVFQDLKA.

Belongs to the LeuD family. LeuD type 1 subfamily. As to quaternary structure, heterodimer of LeuC and LeuD.

It carries out the reaction (2R,3S)-3-isopropylmalate = (2S)-2-isopropylmalate. It functions in the pathway amino-acid biosynthesis; L-leucine biosynthesis; L-leucine from 3-methyl-2-oxobutanoate: step 2/4. Its function is as follows. Catalyzes the isomerization between 2-isopropylmalate and 3-isopropylmalate, via the formation of 2-isopropylmaleate. This Acinetobacter baylyi (strain ATCC 33305 / BD413 / ADP1) protein is 3-isopropylmalate dehydratase small subunit.